The following is a 294-amino-acid chain: UPF0761 membrane protein YPTB0027 (294 aa).

The next 7 helical transmembrane spans lie at 44–64 (LLSLVPLITVIFALFAAFPMF), 67–87 (ISIKLKAFIFANFMPATGDII), 108–128 (GLIVTALLLIYSVDSVLNIIW), 136–156 (LVFSFAVYWMVLTLGPILVGA), 185–205 (VFPLLISWVSFWLLYSVVPTV), 212–232 (ALIGALVAALLFELGKKGFAM), and 246–266 (VLAVIPILFLWVYWSWCIVLL).

Belongs to the UPF0761 family.

It is found in the cell inner membrane. The protein is UPF0761 membrane protein YPTB0027 of Yersinia pseudotuberculosis serotype I (strain IP32953).